Consider the following 336-residue polypeptide: GTPase Obg (336 aa).

In terms of domain architecture, Obg spans 1–159 (MKFLDETKVY…KTIWLRLKLI (159 aa)). The OBG-type G domain maps to 160-327 (ADAGLVGLPN…TLRALRSVID (168 aa)). Residues 166-173 (GLPNAGKS), 191-195 (FTTLH), 212-215 (DIPG), 279-282 (SQID), and 308-310 (SAV) each bind GTP. S173 and T193 together coordinate Mg(2+).

It belongs to the TRAFAC class OBG-HflX-like GTPase superfamily. OBG GTPase family. In terms of assembly, monomer. Mg(2+) is required as a cofactor.

It is found in the cytoplasm. Functionally, an essential GTPase which binds GTP, GDP and possibly (p)ppGpp with moderate affinity, with high nucleotide exchange rates and a fairly low GTP hydrolysis rate. Plays a role in control of the cell cycle, stress response, ribosome biogenesis and in those bacteria that undergo differentiation, in morphogenesis control. The polypeptide is GTPase Obg (Sinorhizobium medicae (strain WSM419) (Ensifer medicae)).